A 775-amino-acid chain; its full sequence is Acylamino-acid-releasing enzyme 1 (775 aa).

Residues Ser-627, Asp-718, and His-750 each act as charge relay system in the active site.

Belongs to the peptidase S9C family. As to quaternary structure, homotetramer.

It is found in the cytoplasm. The catalysed reaction is Cleavage of an N-acetyl or N-formyl amino acid from the N-terminus of a polypeptide.. In terms of biological role, catalyzes the hydrolysis of the N-terminal peptide bond of an N-acetylated peptide to generate an N-acetylated amino acid and a peptide with a free N-terminus. The protein is Acylamino-acid-releasing enzyme 1 of Oryza sativa subsp. japonica (Rice).